Reading from the N-terminus, the 141-residue chain is Hemoglobin subunit alpha (141 aa).

One can recognise a Globin domain in the interval 1–141 (VLSEADKSNV…VSTVLTSKYR (141 aa)). O2 is bound at residue His58. A heme b-binding site is contributed by His87.

The protein belongs to the globin family. In terms of assembly, heterotetramer of two alpha chains and two beta chains. When oxygenated in vitro, exists virtually only in polymeric form. When deoxygenated, forms tetramers, octamers and larger polymers. Red blood cells.

Functionally, involved in oxygen transport from the lung to the various peripheral tissues. The chain is Hemoglobin subunit alpha from Paleosuchus palpebrosus (Cuvier's smooth-fronted caiman).